The primary structure comprises 105 residues: uncharacterized protein (105 aa).

The disordered stretch occupies residues 1-27 (MQSPAMKRIKSSSHSRWDGSGSVNEMP).

The protein localises to the mitochondrion. This is an uncharacterized protein from Arabidopsis thaliana (Mouse-ear cress).